Consider the following 554-residue polypeptide: Putative F-box/LRR-repeat protein 8 (554 aa).

Positions 71–117 (YDYISNLPDECLSLIFQSLTCADLKRCSLVCRRWLTIEGQCRHRLSL) constitute an F-box domain. 12 LRR repeats span residues 119 to 144 (AQSD…VLRS), 148 to 173 (SLGI…KLRG), 174 to 199 (CPEI…SFGS), 205 to 224 (KGMN…SVKR), 250 to 275 (KELH…KIFR), 301 to 325 (RIQM…HLVK), 326 to 351 (TPDC…HIDG), 354 to 379 (TNRI…VLIG), 383 to 404 (TKLS…ALCG), 405 to 428 (SDTV…KLCI), 430 to 455 (NCPI…KVKK), and 456 to 480 (CRGV…NLDA).

This Arabidopsis thaliana (Mouse-ear cress) protein is Putative F-box/LRR-repeat protein 8 (FBL8).